Reading from the N-terminus, the 312-residue chain is Olfactory receptor-like protein COR4 (312 aa).

At 1 to 26 the chain is on the extracellular side; it reads MASGNCTTPTTFILSGLTDNPGLQMP. Asn-5 is a glycosylation site (N-linked (GlcNAc...) asparagine). The chain crosses the membrane as a helical span at residues 27 to 49; the sequence is LFMVFLAIYTITLLTNLGLIALI. Residues 50–57 lie on the Cytoplasmic side of the membrane; that stretch reads SVDLHLQT. Residues 58-79 traverse the membrane as a helical segment; that stretch reads PMYIFLQNLSFTDAAYSTVITP. The Extracellular segment spans residues 80-100; it reads KMLATFLEERKTISYIGCILQ. Cys-97 and Cys-179 are disulfide-bonded. A helical membrane pass occupies residues 101–120; it reads YFSFVLLTVTESLLLAVMAY. Topologically, residues 121 to 139 are cytoplasmic; it reads DRYVAICKPLLYPSIMTKA. The helical transmembrane segment at 140–164 threads the bilayer; that stretch reads VCWRLVKGLYSLAFLNSLVHTSGLL. Residues 165-205 lie on the Extracellular side of the membrane; that stretch reads KLSFCSSNVVNHFFCDNSPLFQISSSSTTLNELLVFIFGSL. Residues 206–226 form a helical membrane-spanning segment; it reads FAMSSIITILISYVFIILTVV. Over 227 to 239 the chain is Cytoplasmic; it reads RIRSKDGKYKAFS. A helical membrane pass occupies residues 240 to 260; sequence TCTSHLMAVSLFHGTVIFMYL. The Extracellular portion of the chain corresponds to 261 to 271; the sequence is RPVKLFSLDTD. Residues 272-292 traverse the membrane as a helical segment; that stretch reads KIASLFYTVVIPMLNPLIYSW. Residues 293–312 lie on the Cytoplasmic side of the membrane; that stretch reads RNKEVKDALRRVIATNVWIH.

The protein belongs to the G-protein coupled receptor 1 family.

Its subcellular location is the cell membrane. Functionally, odorant receptor. In Gallus gallus (Chicken), this protein is Olfactory receptor-like protein COR4 (COR4).